Here is a 324-residue protein sequence, read N- to C-terminus: Beta-ketoacyl-[acyl-carrier-protein] synthase III (324 aa).

Residues cysteine 112 and histidine 249 contribute to the active site. The tract at residues 250-254 is ACP-binding; it reads QANDR. Residue asparagine 279 is part of the active site.

It belongs to the thiolase-like superfamily. FabH family. Homodimer.

The protein resides in the cytoplasm. The enzyme catalyses malonyl-[ACP] + acetyl-CoA + H(+) = 3-oxobutanoyl-[ACP] + CO2 + CoA. Its pathway is lipid metabolism; fatty acid biosynthesis. Its function is as follows. Catalyzes the condensation reaction of fatty acid synthesis by the addition to an acyl acceptor of two carbons from malonyl-ACP. Catalyzes the first condensation reaction which initiates fatty acid synthesis and may therefore play a role in governing the total rate of fatty acid production. Possesses both acetoacetyl-ACP synthase and acetyl transacylase activities. Its substrate specificity determines the biosynthesis of branched-chain and/or straight-chain of fatty acids. In Streptococcus pneumoniae serotype 19F (strain G54), this protein is Beta-ketoacyl-[acyl-carrier-protein] synthase III.